A 29-amino-acid polypeptide reads, in one-letter code: Cyclotide mela-7 (29 aa).

Positions 1–29 form a cross-link, cyclopeptide (Gly-Asn); that stretch reads GLPTCGETCFKGKCYTPGCSCSYPICKKN. 3 disulfide bridges follow: Cys5-Cys19, Cys9-Cys21, and Cys14-Cys26.

In terms of processing, this is a cyclic peptide. Contains 3 disulfide bonds.

Probably participates in a plant defense mechanism (Potential). Binds to and induces leakage in phospholipd membranes, particularly ones containing 1-palmitoyl-2-oleophosphatidylethanolamine (POPE). In vitro, displays cytotoxicity against cultured cells but no hemolytic activity towards fresh erythrocytes. Not active against Gram-negative bacterium E.coli ATCC 25922 or Gram-positive bacterium S.aureus ATCC 25923 up to a concentration of 64 uM. In Melicytus latifolius (Norfolk Island mahoe), this protein is Cyclotide mela-7.